Consider the following 889-residue polypeptide: Cytoplasmic aconitate hydratase (889 aa).

Residues Q86 and 205–207 (DSH) each bind substrate. Residues C437, C503, and C506 each contribute to the [4Fe-4S] cluster site. Substrate is bound by residues R536, R541, R699, and 779 to 780 (SR).

This sequence belongs to the aconitase/IPM isomerase family. Interacts (when associated with the 4Fe-4S) with FBXL5. Interacts with frataxin(81-210). It depends on [4Fe-4S] cluster as a cofactor.

It localises to the cytoplasm. The protein resides in the cytosol. The catalysed reaction is citrate = D-threo-isocitrate. Bifunctional iron sensor that switches between 2 activities depending on iron availability. Iron deprivation, promotes its mRNA binding activity through which it regulates the expression of genes involved in iron uptake, sequestration and utilization. Binds to iron-responsive elements (IRES) in the untranslated region of target mRNAs preventing for instance the translation of ferritin and aminolevulinic acid synthase and stabilizing the transferrin receptor mRNA. Functionally, conversely, when cellular iron levels are high, binds a 4Fe-4S cluster which precludes RNA binding activity and promotes the aconitase activity, the isomerization of citrate to isocitrate via cis-aconitate. In Mus musculus (Mouse), this protein is Cytoplasmic aconitate hydratase (Aco1).